Reading from the N-terminus, the 156-residue chain is 6,7-dimethyl-8-ribityllumazine synthase (156 aa).

5-amino-6-(D-ribitylamino)uracil is bound by residues phenylalanine 22, 56–58 (AFE), and 80–82 (VVI). 85–86 (ST) is a (2S)-2-hydroxy-3-oxobutyl phosphate binding site. The active-site Proton donor is histidine 88. Residue phenylalanine 113 coordinates 5-amino-6-(D-ribitylamino)uracil. A (2S)-2-hydroxy-3-oxobutyl phosphate-binding site is contributed by arginine 127.

It belongs to the DMRL synthase family.

The catalysed reaction is (2S)-2-hydroxy-3-oxobutyl phosphate + 5-amino-6-(D-ribitylamino)uracil = 6,7-dimethyl-8-(1-D-ribityl)lumazine + phosphate + 2 H2O + H(+). The protein operates within cofactor biosynthesis; riboflavin biosynthesis; riboflavin from 2-hydroxy-3-oxobutyl phosphate and 5-amino-6-(D-ribitylamino)uracil: step 1/2. Catalyzes the formation of 6,7-dimethyl-8-ribityllumazine by condensation of 5-amino-6-(D-ribitylamino)uracil with 3,4-dihydroxy-2-butanone 4-phosphate. This is the penultimate step in the biosynthesis of riboflavin. In Streptococcus agalactiae serotype Ia (strain ATCC 27591 / A909 / CDC SS700), this protein is 6,7-dimethyl-8-ribityllumazine synthase.